A 149-amino-acid polypeptide reads, in one-letter code: UPF0260 protein PFLU_1520 (149 aa).

Belongs to the UPF0260 family.

The polypeptide is UPF0260 protein PFLU_1520 (Pseudomonas fluorescens (strain SBW25)).